The sequence spans 525 residues: Cytochrome P450 monooxygenase tpcC (525 aa).

A helical membrane pass occupies residues 13-33 (LPVTLVSLLVGSIFYFCYLTV). Cysteine 457 contributes to the heme binding site.

It belongs to the cytochrome P450 family. Heme serves as cofactor.

Its subcellular location is the membrane. The protein operates within secondary metabolite biosynthesis; terpenoid biosynthesis. Its function is as follows. Cytochrome P450 monooxygenase; part of the gene cluster that mediates the biosynthesis of terpestacin. The bifunctional terpene synthase tpcA converts isopentenyl diphosphate (IPP) and dimethylallyl diphosphate (DMAPP) into the sesterterpene preterpestacin I. The C-terminal prenyltransferase (PT) domain of tpcA catalyzes formation of GFPP, whereas the N-terminal terpene cyclase (TC) domain catalyzes the cyclization of GFPP into preterpestacin I. The cytochrome P450 monooxygenase tpcB then hydroxylates preterpestacin I to yield 24-hydroxypreterpstacin I (renamed as preterpestacin II) whereas the cytochrome P450 monooxygenase tpcC further hydroxylates preterpestacin II to yield 16,17-dihydroxypreterpestacin II (renamed as preterpestacin III). Finally, the FAD-dependent monooxygenase tpcD converts preterpestacin III into terpestacin. This chain is Cytochrome P450 monooxygenase tpcC, found in Cochliobolus heterostrophus (strain C5 / ATCC 48332 / race O) (Southern corn leaf blight fungus).